We begin with the raw amino-acid sequence, 676 residues long: MNATLNSAGGKRQLRFRGDVTGSRVEELHHQQQEEQKQKAPLAQDDVAATPTATPAAGSAQQRLQSGTAETCTNTFYDFFKVEMTRGYMLEHDEERYSARRQKIYSFMRIPRDLERFMVYGIMQCADSFLYIHTFLPVRFVMAVWALVSRTVARIFRLRSSGQRLLSPAEICDLLKGVIWMTVTLIMLLVDTNRVYHIIKSQSIIKLYIFYNMLEVGDRLLSAFGQDTIDALFWTATEPKNSKREHFGVLTHVLFTLIYVFLHSGLIMFQATCLNVAVNSNNKGLLTIMISNNFVELKGSVFKKFDKNNLFQLTCSDVRERFHLSVLLFIVVIQTMKEFDWSITQFCVMLPDCFAVLFTEILIDWVKHAFITRFNELPESIYREYTTSLAYDMTQTRQKHAFSDHSDLVARRMGFIPFPLAVVLIKAIYTAVSFENLAAWLLFLLAYLFAMGLRICLTICALGKACKLMKEHQTERNSSTPSSMTNVPVIGAAAPVSAAATGGQNHNNNNNNNNNSISIGSKPAQVTTLLTPPSAGHLDVSKNFSRTSIASTSTPKKAVSEQELDVTNSLELGATALFSNSDVDLDDVCLNEQVTNTNTSSAVQEVYQEQDLVRSQPDLMLLNNSGDGVTSAKAKKATQRLPKRTHKRSESEPGMPSMVEKGGAAGIAGGNQTTQL.

A disordered region spans residues 1 to 44 (MNATLNSAGGKRQLRFRGDVTGSRVEELHHQQQEEQKQKAPLAQ). Residues 24–38 (RVEELHHQQQEEQKQ) show a composition bias toward basic and acidic residues. 6 consecutive transmembrane segments (helical) span residues 128–148 (SFLY…WALV), 170–190 (EICD…MLLV), 249–269 (VLTH…LIMF), 346–366 (FCVM…IDWV), 414–434 (GFIP…AVSF), and 437–457 (LAAW…RICL). The disordered stretch occupies residues 625 to 676 (SGDGVTSAKAKKATQRLPKRTHKRSESEPGMPSMVEKGGAAGIAGGNQTTQL). Over residues 633 to 647 (KAKKATQRLPKRTHK) the composition is skewed to basic residues.

This sequence belongs to the TAPT1 family.

The protein localises to the membrane. This is Protein TAPT1 homolog from Drosophila melanogaster (Fruit fly).